A 66-amino-acid chain; its full sequence is MAKGKDARVTIILECTSCVRNGVNKESTGISRYITQKNRHNTPSRLELRKFCPYCYKHTIHGEIKK.

It belongs to the bacterial ribosomal protein bL33 family.

It is found in the plastid. It localises to the chloroplast. The sequence is that of Large ribosomal subunit protein bL33c from Carica papaya (Papaya).